A 183-amino-acid polypeptide reads, in one-letter code: Large ribosomal subunit protein uL13m (183 aa).

The protein belongs to the universal ribosomal protein uL13 family. In terms of assembly, component of the mitochondrial large ribosomal subunit (mt-LSU). Mature N.crassa 74S mitochondrial ribosomes consist of a small (37S) and a large (54S) subunit. The 37S small subunit contains a 16S ribosomal RNA (16S mt-rRNA) and 32 different proteins. The 54S large subunit contains a 23S rRNA (23S mt-rRNA) and 42 different proteins.

It localises to the mitochondrion. Functionally, component of the mitochondrial ribosome (mitoribosome), a dedicated translation machinery responsible for the synthesis of mitochondrial genome-encoded proteins, including at least some of the essential transmembrane subunits of the mitochondrial respiratory chain. The mitoribosomes are attached to the mitochondrial inner membrane and translation products are cotranslationally integrated into the membrane. This chain is Large ribosomal subunit protein uL13m (mrpl23), found in Neurospora crassa (strain ATCC 24698 / 74-OR23-1A / CBS 708.71 / DSM 1257 / FGSC 987).